A 248-amino-acid chain; its full sequence is Ubiquinone/menaquinone biosynthesis C-methyltransferase UbiE (248 aa).

The S-adenosyl-L-methionine site is built by Ser68 and Asp92.

It belongs to the class I-like SAM-binding methyltransferase superfamily. MenG/UbiE family.

It catalyses the reaction a 2-demethylmenaquinol + S-adenosyl-L-methionine = a menaquinol + S-adenosyl-L-homocysteine + H(+). It carries out the reaction a 2-methoxy-6-(all-trans-polyprenyl)benzene-1,4-diol + S-adenosyl-L-methionine = a 5-methoxy-2-methyl-3-(all-trans-polyprenyl)benzene-1,4-diol + S-adenosyl-L-homocysteine + H(+). Its pathway is quinol/quinone metabolism; menaquinone biosynthesis; menaquinol from 1,4-dihydroxy-2-naphthoate: step 2/2. It functions in the pathway cofactor biosynthesis; ubiquinone biosynthesis. In terms of biological role, methyltransferase required for the conversion of demethylmenaquinol (DMKH2) to menaquinol (MKH2) and the conversion of 2-polyprenyl-6-methoxy-1,4-benzoquinol (DDMQH2) to 2-polyprenyl-3-methyl-6-methoxy-1,4-benzoquinol (DMQH2). The protein is Ubiquinone/menaquinone biosynthesis C-methyltransferase UbiE of Rickettsia akari (strain Hartford).